The sequence spans 158 residues: Transcription elongation factor GreA (158 aa).

Positions 45–72 form a coiled coil; the sequence is AEYHAAREQQSFIEGRIKQLEGELSHAE.

This sequence belongs to the GreA/GreB family.

Its function is as follows. Necessary for efficient RNA polymerase transcription elongation past template-encoded arresting sites. The arresting sites in DNA have the property of trapping a certain fraction of elongating RNA polymerases that pass through, resulting in locked ternary complexes. Cleavage of the nascent transcript by cleavage factors such as GreA or GreB allows the resumption of elongation from the new 3'terminus. GreA releases sequences of 2 to 3 nucleotides. The protein is Transcription elongation factor GreA of Xylella fastidiosa (strain M23).